Consider the following 143-residue polypeptide: Transcriptional regulator MraZ (143 aa).

2 consecutive SpoVT-AbrB domains span residues 5-47 (QYEH…SLEE) and 76-119 (AVEC…SKEV).

This sequence belongs to the MraZ family. As to quaternary structure, forms oligomers.

The protein resides in the cytoplasm. The protein localises to the nucleoid. The chain is Transcriptional regulator MraZ from Thermoanaerobacter sp. (strain X514).